The sequence spans 249 residues: Triosephosphate isomerase (249 aa).

11–13 (NWK) contributes to the substrate binding site. H91 acts as the Electrophile in catalysis. The Proton acceptor role is filled by E163. Substrate-binding positions include G169, S208, and 229 to 230 (GG).

Belongs to the triosephosphate isomerase family. In terms of assembly, homodimer.

The protein localises to the cytoplasm. It catalyses the reaction D-glyceraldehyde 3-phosphate = dihydroxyacetone phosphate. It participates in carbohydrate biosynthesis; gluconeogenesis. Its pathway is carbohydrate degradation; glycolysis; D-glyceraldehyde 3-phosphate from glycerone phosphate: step 1/1. Its function is as follows. Involved in the gluconeogenesis. Catalyzes stereospecifically the conversion of dihydroxyacetone phosphate (DHAP) to D-glyceraldehyde-3-phosphate (G3P). The polypeptide is Triosephosphate isomerase (Pseudoalteromonas translucida (strain TAC 125)).